A 630-amino-acid chain; its full sequence is Protein zwilch homolog (630 aa).

It belongs to the ZWILCH family. Component of the RZZ complex composed of rod-1, czw-1 and zwl-1. Interacts with the spindly-like protein spdl-1. Interacts with NDC80 complex component ndc-80.

The protein localises to the cytoplasm. It localises to the cell cortex. Its subcellular location is the chromosome. The protein resides in the centromere. It is found in the kinetochore. The protein localises to the cytoskeleton. It localises to the spindle. Functionally, essential component of the mitotic checkpoint, which prevents cells from prematurely exiting mitosis. Required for chromosome segregation, the assembly of the dynein-dynactin and mdf-1-mdf-2 complexes onto kinetochores and spindle pole separation. Its function related to the spindle assembly machinery and kinetochore-microtubule attachments likely depends on its association in the mitotic RZZ complex. The RZZ complex recruits the spindly-like protein spdl-1 to kinetochores. To prevent irregular chromosome segregation, the complex also inhibits the attachment of the kinetochore-associated NDC80 complex to microtubules. The recruitment of spdl-1 to kinetochores relieves this inhibition. Required for embryonic development. The chain is Protein zwilch homolog (zwl-1) from Caenorhabditis elegans.